A 179-amino-acid polypeptide reads, in one-letter code: Large ribosomal subunit protein bL19 (179 aa).

It belongs to the bacterial ribosomal protein bL19 family.

This protein is located at the 30S-50S ribosomal subunit interface and may play a role in the structure and function of the aminoacyl-tRNA binding site. This Rhizobium johnstonii (strain DSM 114642 / LMG 32736 / 3841) (Rhizobium leguminosarum bv. viciae) protein is Large ribosomal subunit protein bL19.